The sequence spans 160 residues: SsrA-binding protein (160 aa).

The span at 137–153 (DKRDDIKTREWKQDKAR) shows a compositional bias: basic and acidic residues. The disordered stretch occupies residues 137–160 (DKRDDIKTREWKQDKARIMKNANR).

Belongs to the SmpB family.

Its subcellular location is the cytoplasm. Required for rescue of stalled ribosomes mediated by trans-translation. Binds to transfer-messenger RNA (tmRNA), required for stable association of tmRNA with ribosomes. tmRNA and SmpB together mimic tRNA shape, replacing the anticodon stem-loop with SmpB. tmRNA is encoded by the ssrA gene; the 2 termini fold to resemble tRNA(Ala) and it encodes a 'tag peptide', a short internal open reading frame. During trans-translation Ala-aminoacylated tmRNA acts like a tRNA, entering the A-site of stalled ribosomes, displacing the stalled mRNA. The ribosome then switches to translate the ORF on the tmRNA; the nascent peptide is terminated with the 'tag peptide' encoded by the tmRNA and targeted for degradation. The ribosome is freed to recommence translation, which seems to be the essential function of trans-translation. The polypeptide is SsrA-binding protein (Edwardsiella ictaluri (strain 93-146)).